A 174-amino-acid chain; its full sequence is UPF0200 protein PAE1629 (174 aa).

9–16 lines the ATP pocket; it reads GLPGSGKT.

Belongs to the UPF0200 family.

In Pyrobaculum aerophilum (strain ATCC 51768 / DSM 7523 / JCM 9630 / CIP 104966 / NBRC 100827 / IM2), this protein is UPF0200 protein PAE1629.